A 163-amino-acid polypeptide reads, in one-letter code: Nucleotide-binding protein Ava_2001 (163 aa).

This sequence belongs to the YajQ family.

Nucleotide-binding protein. This is Nucleotide-binding protein Ava_2001 from Trichormus variabilis (strain ATCC 29413 / PCC 7937) (Anabaena variabilis).